A 290-amino-acid chain; its full sequence is Pantothenate synthetase (290 aa).

34 to 41 contacts ATP; that stretch reads MGNLHDGH. His41 functions as the Proton donor in the catalytic mechanism. Gln65 contacts (R)-pantoate. Residue Gln65 coordinates beta-alanine. 156 to 159 lines the ATP pocket; sequence GKKD. Residue Gln162 participates in (R)-pantoate binding. ATP-binding positions include Ala185 and 193–196; that span reads LSSR.

Belongs to the pantothenate synthetase family. As to quaternary structure, homodimer.

It is found in the cytoplasm. It catalyses the reaction (R)-pantoate + beta-alanine + ATP = (R)-pantothenate + AMP + diphosphate + H(+). The protein operates within cofactor biosynthesis; (R)-pantothenate biosynthesis; (R)-pantothenate from (R)-pantoate and beta-alanine: step 1/1. Its function is as follows. Catalyzes the condensation of pantoate with beta-alanine in an ATP-dependent reaction via a pantoyl-adenylate intermediate. This is Pantothenate synthetase from Acidovorax ebreus (strain TPSY) (Diaphorobacter sp. (strain TPSY)).